The following is a 123-amino-acid chain: UPF0102 protein Maqu_2464 (123 aa).

The protein belongs to the UPF0102 family.

The sequence is that of UPF0102 protein Maqu_2464 from Marinobacter nauticus (strain ATCC 700491 / DSM 11845 / VT8) (Marinobacter aquaeolei).